Here is a 572-residue protein sequence, read N- to C-terminus: Proline--tRNA ligase (572 aa).

The protein belongs to the class-II aminoacyl-tRNA synthetase family. ProS type 1 subfamily. As to quaternary structure, homodimer. May form a tertiary complex with YbaK and t-RNA(Pro).

The protein resides in the cytoplasm. The enzyme catalyses tRNA(Pro) + L-proline + ATP = L-prolyl-tRNA(Pro) + AMP + diphosphate. Functionally, catalyzes the attachment of proline to tRNA(Pro) in a two-step reaction: proline is first activated by ATP to form Pro-AMP and then transferred to the acceptor end of tRNA(Pro). As ProRS can inadvertently accommodate and process non-cognate amino acids such as alanine and cysteine, to avoid such errors it has two additional distinct editing activities against alanine. One activity is designated as 'pretransfer' editing and involves the tRNA(Pro)-independent hydrolysis of activated Ala-AMP. The other activity is designated 'posttransfer' editing and involves deacylation of mischarged Ala-tRNA(Pro). The misacylated Cys-tRNA(Pro) is not edited by ProRS, but is probably edited in trans by YbaK. This Haemophilus influenzae (strain ATCC 51907 / DSM 11121 / KW20 / Rd) protein is Proline--tRNA ligase.